Consider the following 401-residue polypeptide: Alpha-(1,4)-fucosyltransferase (401 aa).

Residues 1–4 (MPMR) are Cytoplasmic-facing. The helical; Signal-anchor for type II membrane protein transmembrane segment at 5–27 (YLNAMAALLMMFFTLLILSFTGI) threads the bilayer. The Lumenal segment spans residues 28–401 (LEFPSASTSM…SRRGGKNAGV (374 aa)). N-linked (GlcNAc...) asparagine glycosylation is present at Asn85.

This sequence belongs to the glycosyltransferase 10 family. As to expression, present in root, stem, flower buds and green siliques.

Its subcellular location is the golgi apparatus. It localises to the golgi stack membrane. Its pathway is protein modification; protein glycosylation. May be involved in cell wall synthesis. Catalyzes alpha-1,4 glycosidic linkages and generates Lewis-a epitopes. This Arabidopsis thaliana (Mouse-ear cress) protein is Alpha-(1,4)-fucosyltransferase (FUT13).